Here is a 209-residue protein sequence, read N- to C-terminus: Imidazoleglycerol-phosphate dehydratase (209 aa).

Belongs to the imidazoleglycerol-phosphate dehydratase family.

The protein localises to the cytoplasm. The catalysed reaction is D-erythro-1-(imidazol-4-yl)glycerol 3-phosphate = 3-(imidazol-4-yl)-2-oxopropyl phosphate + H2O. It participates in amino-acid biosynthesis; L-histidine biosynthesis; L-histidine from 5-phospho-alpha-D-ribose 1-diphosphate: step 6/9. This Paracidovorax citrulli (strain AAC00-1) (Acidovorax citrulli) protein is Imidazoleglycerol-phosphate dehydratase.